The primary structure comprises 343 residues: Nuclear distribution protein nudE-like 1 (343 aa).

A coiled-coil region spans residues 25–190; it reads KYKQSFQEAR…LAVRERQQEV (166 aa). Disordered stretches follow at residues 184-204 and 322-343; these read RERQQEVTRKSAPSSPTLDCE and QGTPGLGASRPSSAPGMLPLSV.

Belongs to the nudE family. Post-translationally, phosphorylated in mitosis.

The protein resides in the cytoplasm. Its subcellular location is the cytoskeleton. It is found in the microtubule organizing center. The protein localises to the centrosome. It localises to the spindle. Required for organization of the cellular microtubule array and microtubule anchoring at the centrosome. Positively regulates the activity of the minus-end directed microtubule motor protein dynein. May enhance dynein-mediated microtubule sliding by targeting dynein to the microtubule plus end. Positively regulates lysosome peripheral distribution and ruffled border formation in osteoclasts. This Gallus gallus (Chicken) protein is Nuclear distribution protein nudE-like 1 (NDEL1).